The following is a 1896-amino-acid chain: Plexin-A1 (1896 aa).

A signal peptide spans 1-26; the sequence is MPLPPRSLQVLLLLLLLLLLLPGMWA. Positions 27–512 constitute a Sema domain; sequence EAGLPRAGGG…TEKQVTRVPV (486 aa). At 27 to 1244 the chain is on the extracellular side; the sequence is EAGLPRAGGG…VYSDSLLTLP (1218 aa). Residue Asn77 is glycosylated (N-linked (GlcNAc...) asparagine). Cystine bridges form between Cys95/Cys104, Cys130/Cys138, Cys286/Cys407, Cys302/Cys358, Cys376/Cys395, Cys515/Cys532, Cys521/Cys563, Cys524/Cys541, Cys535/Cys547, and Cys598/Cys617. 3 N-linked (GlcNAc...) asparagine glycosylation sites follow: Asn660, Asn672, and Asn701. IPT/TIG domains follow at residues 864–959, 961–1045, 1048–1147, and 1150–1236; these read PKIL…FTFV, PTFY…YNYT, PTIL…FLYY, and PVLE…LQVY. Asn1043 is a glycosylation site (N-linked (GlcNAc...) asparagine). N-linked (GlcNAc...) asparagine glycans are attached at residues Asn1187 and Asn1212. A helical membrane pass occupies residues 1245–1265; sequence AIVGIGGGGGLLLLVIVAVLI. A coiled-coil region spans residues 1264–1317; that stretch reads LIAYKRKSRDADRTLKRLQLQMDNLESRVALECKEAFAELQTDIHELTNDLDGA. The Cytoplasmic segment spans residues 1266–1896; it reads AYKRKSRDAD…QVVDTMALSS (631 aa).

It belongs to the plexin family. In terms of assembly, interacts directly with NRP1 and NRP2. Interacts with PLXN1B. Interacts with FARP2, RND1 and KDR/VEGFR2. Binding of SEMA3A leads to dissociation of FARP2. Interacts with CRMP1, DPYSL2/CRMP2, DPYSL3/CRMP3 and DPYSL4/CRMP4. Interacts (via TIG domains) with TREM2; the interaction mediates SEMA6D binding and signaling through TYROBP. As to expression, detected in fetal brain, lung, liver and kidney.

It is found in the cell membrane. Coreceptor for SEMA3A, SEMA3C, SEMA3F and SEMA6D. Necessary for signaling by class 3 semaphorins and subsequent remodeling of the cytoskeleton. Plays a role in axon guidance, invasive growth and cell migration. Class 3 semaphorins bind to a complex composed of a neuropilin and a plexin. The plexin modulates the affinity of the complex for specific semaphorins, and its cytoplasmic domain is required for the activation of down-stream signaling events in the cytoplasm. Acts as coreceptor of TREM2 for SEMA6D in dendritic cells and is involved in the generation of immune responses and skeletal homeostasis. This is Plexin-A1 from Homo sapiens (Human).